Here is a 151-residue protein sequence, read N- to C-terminus: Ribosome maturation factor RimP (151 aa).

This sequence belongs to the RimP family.

It is found in the cytoplasm. In terms of biological role, required for maturation of 30S ribosomal subunits. The protein is Ribosome maturation factor RimP of Vibrio parahaemolyticus serotype O3:K6 (strain RIMD 2210633).